Reading from the N-terminus, the 88-residue chain is Putative membrane protein insertion efficiency factor (88 aa).

The interval valine 68 to leucine 88 is disordered. A compositionally biased stretch (basic and acidic residues) spans threonine 75–leucine 88.

The protein belongs to the UPF0161 family.

The protein localises to the cell inner membrane. Its function is as follows. Could be involved in insertion of integral membrane proteins into the membrane. The chain is Putative membrane protein insertion efficiency factor from Burkholderia cenocepacia (strain ATCC BAA-245 / DSM 16553 / LMG 16656 / NCTC 13227 / J2315 / CF5610) (Burkholderia cepacia (strain J2315)).